Here is a 520-residue protein sequence, read N- to C-terminus: 2-isopropylmalate synthase (520 aa).

Positions 12 to 274 constitute a Pyruvate carboxyltransferase domain; that stretch reads IRIFDTTLRD…DSAINTPRIV (263 aa). Mn(2+) is bound by residues D21, H209, H211, and N245. A regulatory domain region spans residues 396 to 520; it reads RLASMTISDV…VVAGKTAAVA (125 aa).

The protein belongs to the alpha-IPM synthase/homocitrate synthase family. LeuA type 1 subfamily. As to quaternary structure, homodimer. Requires Mn(2+) as cofactor.

The protein localises to the cytoplasm. The enzyme catalyses 3-methyl-2-oxobutanoate + acetyl-CoA + H2O = (2S)-2-isopropylmalate + CoA + H(+). It functions in the pathway amino-acid biosynthesis; L-leucine biosynthesis; L-leucine from 3-methyl-2-oxobutanoate: step 1/4. Its function is as follows. Catalyzes the condensation of the acetyl group of acetyl-CoA with 3-methyl-2-oxobutanoate (2-ketoisovalerate) to form 3-carboxy-3-hydroxy-4-methylpentanoate (2-isopropylmalate). The protein is 2-isopropylmalate synthase of Xanthomonas axonopodis pv. citri (strain 306).